A 255-amino-acid polypeptide reads, in one-letter code: Pimeloyl-[acyl-carrier protein] methyl ester esterase (255 aa).

In terms of domain architecture, AB hydrolase-1 spans 16 to 242 (LVLLHGWGLN…AAHAPFISHP (227 aa)). Substrate contacts are provided by residues Trp-22, 82–83 (SL), and 143–147 (FLALQ). The active-site Nucleophile is the Ser-82. Residues Asp-207 and His-235 contribute to the active site. Substrate is bound at residue His-235.

Belongs to the AB hydrolase superfamily. Carboxylesterase BioH family. As to quaternary structure, monomer.

The protein localises to the cytoplasm. The catalysed reaction is 6-carboxyhexanoyl-[ACP] methyl ester + H2O = 6-carboxyhexanoyl-[ACP] + methanol + H(+). It functions in the pathway cofactor biosynthesis; biotin biosynthesis. Its function is as follows. The physiological role of BioH is to remove the methyl group introduced by BioC when the pimeloyl moiety is complete. It allows to synthesize pimeloyl-ACP via the fatty acid synthetic pathway through the hydrolysis of the ester bonds of pimeloyl-ACP esters. This chain is Pimeloyl-[acyl-carrier protein] methyl ester esterase, found in Pectobacterium atrosepticum (strain SCRI 1043 / ATCC BAA-672) (Erwinia carotovora subsp. atroseptica).